A 342-amino-acid polypeptide reads, in one-letter code: (Lyso)-N-acylphosphatidylethanolamine lipase (342 aa).

In terms of domain architecture, AB hydrolase-1 spans 70–201 (PLVMVHGFGG…KAVASVLGRS (132 aa)).

Belongs to the peptidase S33 family. ABHD4/ABHD5 subfamily.

It carries out the reaction N-hexadecanoyl-1,2-di-(9Z-octadecenoyl)-sn-glycero-3-phosphoethanolamine + H2O = N-hexadecanoyl-1-(9Z-octadecenoyl)-sn-glycero-3-phosphoethanolamine + (9Z)-octadecenoate + H(+). The enzyme catalyses an N-acyl-1,2-diacyl-sn-glycero-3-phosphoethanolamine + H2O = N,1-diacyl-sn-glycero-3-phosphoethanolamine + a fatty acid + H(+). The catalysed reaction is N-hexadecanoyl-1-(9Z-octadecenoyl)-sn-glycero-3-phosphoethanolamine + H2O = N-hexadecanoyl-sn-glycero-3-phosphoethanolamine + (9Z)-octadecenoate + H(+). It catalyses the reaction N-octadecanoyl-1-(9Z-octadecenoyl)-sn-glycero-3-phosphoethanolamine + H2O = N-octadecanoyl-sn-glycero-3-phospho-ethanolamine + (9Z)-octadecenoate + H(+). It carries out the reaction N-eicosanoyl-1-(9Z-octadecenoyl)-sn-glycero-3-phosphoethanolamine + H2O = N-eicosanoyl-sn-glycero-3-phosphoethanolamine + (9Z)-octadecenoate + H(+). The enzyme catalyses N,1-di-(9Z-octadecenoyl)-sn-glycero-3-phosphoethanolamine + H2O = N-(9Z-octadecenoyl)-sn-glycero-3-phosphoethanolamine + (9Z)-octadecenoate + H(+). The catalysed reaction is N-(5Z,8Z,11Z,14Z-eicosatetraenoyl)-1-(9Z-octadecenoyl)-sn-glycero-3-phosphoethanolamine + H2O = N-(5Z,8Z,11Z,14Z-eicosatetraenoyl)-sn-glycero-3-phosphoethanolamine + (9Z)-octadecenoate + H(+). It catalyses the reaction 1-octadecanoyl-2-(9Z-octadecenoyl)-sn-glycero-3-phospho-(N-hexadecanoyl)-serine + H2O = 1-octadecanoyl-2-hydroxy-sn-glycero-3-phospho-(N-hexadecanoyl)-serine + (9Z)-octadecenoate + H(+). It carries out the reaction 1-O-(1Z-octadecenoyl)-2-(9Z-octadecenoyl)-sn-glycero-3-phospho-N-hexadecanoyl-ethanolamine + H2O = 1-O-(1Z-octadecenyl)-sn-glycero-3-phospho-N-hexadecanoyl-ethanolamine + (9Z)-octadecenoate + H(+). The enzyme catalyses N,1-diacyl-sn-glycero-3-phosphoethanolamine + H2O = N-acyl-sn-glycero-3-phosphoethanolamine + a fatty acid + H(+). Its function is as follows. Lysophospholipase selective for N-acyl phosphatidylethanolamine (NAPE). Contributes to the biosynthesis of N-acyl ethanolamines, including the endocannabinoid anandamide by hydrolyzing the sn-1 and sn-2 acyl chains from N-acyl phosphatidylethanolamine (NAPE) generating glycerophospho-N-acyl ethanolamine (GP-NAE), an intermediate for N-acyl ethanolamine biosynthesis. Hydrolyzes substrates bearing saturated, monounsaturated, polyunsaturated N-acyl chains. Shows no significant activity towards other lysophospholipids, including lysophosphatidylcholine, lysophosphatidylethanolamine and lysophosphatidylserine. This is (Lyso)-N-acylphosphatidylethanolamine lipase from Homo sapiens (Human).